Reading from the N-terminus, the 406-residue chain is Tryptophan synthase beta chain (406 aa).

Residue K99 is modified to N6-(pyridoxal phosphate)lysine.

Belongs to the TrpB family. Tetramer of two alpha and two beta chains. Pyridoxal 5'-phosphate serves as cofactor.

The enzyme catalyses (1S,2R)-1-C-(indol-3-yl)glycerol 3-phosphate + L-serine = D-glyceraldehyde 3-phosphate + L-tryptophan + H2O. Its pathway is amino-acid biosynthesis; L-tryptophan biosynthesis; L-tryptophan from chorismate: step 5/5. Functionally, the beta subunit is responsible for the synthesis of L-tryptophan from indole and L-serine. The sequence is that of Tryptophan synthase beta chain from Rhizobium johnstonii (strain DSM 114642 / LMG 32736 / 3841) (Rhizobium leguminosarum bv. viciae).